The sequence spans 249 residues: Fatty acid elongase 5 (249 aa).

A run of 3 helical transmembrane segments spans residues 23-43, 68-88, and 100-120; these read VFVNYPVLIGCHIGYLVVIVL, VALSLVMAINLGQFLVYGVFN, and WIFVHYATKFLDMFDTYFIVL. Residues 131-135 carry the HxxHH motif motif; the sequence is HIYHH. The active-site Nucleophile is His-134. 4 helical membrane passes run 138 to 158, 159 to 179, 193 to 213, and 217 to 236; these read IGFIWGLLLHHGVANGTAFFG, AWINSAVHALMYFHYLYTSLG, MIQFALCILHAVLAVVAHSPI, and WAVLQLCYHLTLLYLFMRFY.

This sequence belongs to the ELO family.

Its subcellular location is the membrane. It carries out the reaction an acyl-CoA + malonyl-CoA + H(+) = a 3-oxoacyl-CoA + CO2 + CoA. The protein operates within lipid metabolism; polyunsaturated fatty acid biosynthesis. In terms of biological role, involved in the synthesis of fatty acids. Elongates C20 polyunsaturated fatty acids (PUFAs) with a preference for n-6 PUFAs. The polypeptide is Fatty acid elongase 5 (Leishmania major).